We begin with the raw amino-acid sequence, 338 residues long: Thiosulfate-binding protein (338 aa).

The N-terminal stretch at 1 to 25 (MAVNLLKKNSLALVASLLLAGHVQA) is a signal peptide.

It belongs to the prokaryotic sulfate-binding protein family. In terms of assembly, the complex is composed of two ATP-binding proteins (CysA), two transmembrane proteins (CysT and CysW) and a solute-binding protein (CysP).

The protein localises to the periplasm. Functionally, part of the ABC transporter complex CysAWTP (TC 3.A.1.6.1) involved in sulfate/thiosulfate import. This protein specifically binds thiosulfate and is involved in its transmembrane transport. This is Thiosulfate-binding protein (cysP) from Escherichia coli (strain K12).